A 478-amino-acid chain; its full sequence is Aspartate ammonia-lyase (478 aa).

Residues T104, S143, T144, N145, and T190 each contribute to the L-aspartate site. The tract at residues 320-329 (GSSIMPAKVN) is SS loop. S321 serves as the catalytic Proton acceptor. Residues S322 and K327 each coordinate L-aspartate.

Belongs to the class-II fumarase/aspartase family. Aspartase subfamily. In terms of assembly, homotetramer.

It carries out the reaction L-aspartate = fumarate + NH4(+). In terms of biological role, catalyzes the reversible conversion of L-aspartate to fumarate and ammonia. This chain is Aspartate ammonia-lyase (aspA), found in Escherichia coli O157:H7.